The primary structure comprises 639 residues: MTLEITGSELIKSKLIDAPERSGVYRMFDVNKQVLYVGKAKNLKKRLTNYIKSNLDNKTLRMIANTCFLEYSITNSEVEALLLEAQLIKKFQPKFNILLKDCKSFPFIKLRLDHDFPQLLKYRGKTLSDGKFFGPFASSAEVNTTLTELQKIFKLRSCTDNYFNSRTRPCLQYEIKRCYAPCVGKINKEDYRDLVTQVKDFLQGRTKELQENLSRKMEELSSQMRFEEAAEIRDRIKALSYVQLKAGVSDVVKDADIIAIVEKNGHYCVEVFLYRAGQACGNIPYFPTSTENSTKEEVLEYFLLQFYQKQHVPAAIIINHEINDKENVIEAIKKINNILQLNITVPNKGGKAKLVQNAETNALFSLEQYLKKFAKNQEIMFEIKELFGLSEIPERIEIYDNSHIQGKFAVGVMVVAGKVGFDKKEYRVFNVHAPSLVCHSRESGDPKRLMDSCFRGNGIKNCGGDIKGDDYEMLRQVLTRRLTRLRQEPHKLPSLMIIDGGKGHLGVVKEVMDKFEMNIPFVCMSKGVDRNTGFEQFHVIGKEVFTLDKNLPVMKYLQILRDEAHNFAIKNHRLGRSRAIKISRLDDIEGVGETRKKALLHYFGSYKAVCDATIYELAKVNGINKLLAEMIFNVLHRKN.

In terms of domain architecture, GIY-YIG spans 20–97; that stretch reads ERSGVYRMFD…IKKFQPKFNI (78 aa). Residues 207–242 enclose the UVR domain; it reads KELQENLSRKMEELSSQMRFEEAAEIRDRIKALSYV.

It belongs to the UvrC family. As to quaternary structure, interacts with UvrB in an incision complex.

It localises to the cytoplasm. Functionally, the UvrABC repair system catalyzes the recognition and processing of DNA lesions. UvrC both incises the 5' and 3' sides of the lesion. The N-terminal half is responsible for the 3' incision and the C-terminal half is responsible for the 5' incision. The polypeptide is UvrABC system protein C (Rickettsia peacockii (strain Rustic)).